A 330-amino-acid polypeptide reads, in one-letter code: Mas-related G-protein coupled receptor member X2 (330 aa).

The Extracellular segment spans residues 1 to 33 (MDPTTLVWGTESTTMNGNDQALPLLCGKETLIL). The helical transmembrane segment at 34–54 (VVLILFIALVGLVGNAFVLWL) threads the bilayer. At 55 to 63 (LGFRMRRNA) the chain is on the cytoplasmic side. Residues 64 to 84 (FSVYVLSLAGADFLFLCFPMI) traverse the membrane as a helical segment. Residues 85-96 (NCLAYLINFFHS) are Extracellular-facing. A helical transmembrane segment spans residues 97–117 (ISINFPSFFTTVMTCAYLAGL). Residues 118-144 (SMLSAISTERCLSVLWPIWYRSRRPRH) lie on the Cytoplasmic side of the membrane. The helical transmembrane segment at 145-165 (LSAVMCVLLWALSLLLSILEG) threads the bilayer. At 166 to 184 (KFCGFLFSDGDSGWCQTFD) the chain is on the extracellular side. The chain crosses the membrane as a helical span at residues 185–205 (FITAAWLMFLFVVLCGSSLAL). Residues 206 to 228 (LVRILCGSRGLPLTRLYLTILLT) lie on the Cytoplasmic side of the membrane. The chain crosses the membrane as a helical span at residues 229-249 (VLIFLLCGLPFGIQWFLILWI). Topologically, residues 250–264 (WKNSDVLFCHIHPVS) are extracellular. Residues 265-285 (VVLSSFNSSANPIIYFFVGSF) form a helical membrane-spanning segment. At 286 to 330 (RKQWRLRQPVLKLALQRALQDTAEVDHSEGCFSQGTLEMSGSSLV) the chain is on the cytoplasmic side.

The protein belongs to the G-protein coupled receptor 1 family. Mas subfamily.

The protein resides in the cell membrane. In terms of biological role, mast cell-specific receptor for basic secretagogues, i.e. cationic amphiphilic drugs, as well as endo- or exogenous peptides, consisting of a basic head group and a hydrophobic core. Recognizes and binds small molecules containing a cyclized tetrahydroisoquinoline (THIQ), such as non-steroidal neuromuscular blocking drugs (NMBDs), including tubocurarine and atracurium. In response to these compounds, mediates pseudo-allergic reactions characterized by histamine release, inflammation and airway contraction. This is Mas-related G-protein coupled receptor member X2 (MRGPRX2) from Trachypithecus francoisi (Francois' leaf monkey).